Here is a 189-residue protein sequence, read N- to C-terminus: Ras-like protein 1 (189 aa).

10-17 (GAGGVGKS) is a GTP binding site. The short motif at 32 to 40 (YDPTIEDSY) is the Effector region element. GTP contacts are provided by residues 57-61 (DTAGQ) and 116-119 (NKCD). Cys-186 bears the Cysteine methyl ester mark. The S-geranylgeranyl cysteine moiety is linked to residue Cys-186. The propeptide at 187–189 (KML) is removed in mature form.

It belongs to the small GTPase superfamily. Ras family.

It is found in the cell membrane. The catalysed reaction is GTP + H2O = GDP + phosphate + H(+). Alternates between an inactive form bound to GDP and an active form bound to GTP. Activated by a guanine nucleotide-exchange factor (GEF) and inactivated by a GTPase-activating protein (GAP). In terms of biological role, ras proteins bind GDP/GTP and possess intrinsic GTPase activity. Plays a role in eye development by regulating cell growth, survival of postmitotic ommatidial cells and differentiation of photoreceptor cells. During larval development, mediates Ptth/tor signaling leading to the production of ecdysone, a hormone required for the initiation of metamorphosis. The chain is Ras-like protein 1 from Drosophila virilis (Fruit fly).